The primary structure comprises 860 residues: Transcription factor E2F8 (860 aa).

Disordered regions lie at residues 1–27 (MENQKENLFSEPHKRGLMKSPLHPSSK) and 38–57 (DLGPLTTPTKPKEVSQGEPW). 2 positions are modified to phosphoserine: Ser-71 and Ser-102. 2 DNA-binding regions span residues 113-182 (RKEK…TWHG) and 261-347 (RKDK…KWTG). Disordered regions lie at residues 407–433 (RRKISSAPSSPVKSNKAESSQNSPPVP), 532–616 (LTPP…PKED), and 745–803 (QMSA…QPVP). A phosphoserine mark is found at Ser-412 and Ser-416. Polar residues-rich tracts occupy residues 412–429 (SAPSSPVKSNKAESSQNS) and 542–554 (VCPTQPSNATGSK). A compositionally biased stretch (basic and acidic residues) spans 555–565 (DPTDAPAEKTA).

It belongs to the E2F/DP family. Interacts with HIF1A. Homodimer and heterodimer: mainly forms homodimers and, to a lesser extent, heterodimers with E2F8. Dimerization is important for DNA-binding. As to expression, highly expressed in liver, skin, thymus and testis. Expressed in trophoblast giant cells throughout placenta development (at protein level).

The protein resides in the nucleus. Its function is as follows. Atypical E2F transcription factor that participates in various processes such as angiogenesis and polyploidization of specialized cells. Mainly acts as a transcription repressor that binds DNA independently of DP proteins and specifically recognizes the E2 recognition site 5'-TTTC[CG]CGC-3'. Directly represses transcription of classical E2F transcription factors such as E2F1: component of a feedback loop in S phase by repressing the expression of E2F1, thereby preventing p53/TP53-dependent apoptosis. Plays a key role in polyploidization of cells in placenta and liver by regulating the endocycle, probably by repressing genes promoting cytokinesis and antagonizing action of classical E2F proteins (E2F1, E2F2 and/or E2F3). Required for placental development by promoting polyploidization of trophoblast giant cells. Acts as a promoter of sprouting angiogenesis, possibly by acting as a transcription activator: associates with HIF1A, recognizes and binds the VEGFA promoter, which is different from canonical E2 recognition site, and activates expression of the VEGFA gene. The polypeptide is Transcription factor E2F8 (E2f8) (Mus musculus (Mouse)).